Consider the following 782-residue polypeptide: Formin-like protein 9 (782 aa).

Residues Met-1–Ala-24 form the signal peptide. Residues Leu-102–Phe-122 form a helical membrane-spanning segment. 3 disordered regions span residues Asp-191 to Glu-223, Met-264 to Val-287, and Ser-387 to Val-407. Over residues Glu-214 to Glu-223 the composition is skewed to acidic residues. Residues Ala-396–Val-407 are compositionally biased toward pro residues. An FH2 domain is found at Leu-406 to Asp-782.

It belongs to the formin-like family. Class-I subfamily.

The protein resides in the membrane. Its function is as follows. Might be involved in the organization and polarity of the actin cytoskeleton. This is Formin-like protein 9 (FH9) from Arabidopsis thaliana (Mouse-ear cress).